The sequence spans 263 residues: MMCEDASDGKKIDETRKYRNNRSSKCRAIIINNVVFCGMEKRIGSDKDKKKLSKLFERLGYQSTSYDNLKSSEILETVRQFTQSNHGDSLIITIMSHGDQGLLYGVDGVPVQMLDIIDLMCTASLAKKPKWLMCVCCRGDRIDRAVRCDGFIDNFFDRFPKFFQFMKSKFPSHQTSSSQADLLVSFSTSPGFLSFRDETKGTWYIQELYRVIIENAKDTHLADLLMETNRRVVEKYEADKVVIVCKQAPEFWSRFTKQLFFDV.

Residues 1 to 8 (MMCEDASD) constitute a propeptide, removed in mature form by cps-1 or ced-3.

The protein belongs to the peptidase C14A family. In terms of assembly, interacts with ced-3 (via large subunit p17 or small subunit p13); the interaction inhibits ced-3 autoactivation. Cleavage by csp-1 isoform b or ced-3 removes the propeptide and generates subunit p31 in vitro. An additional cleavage at Asp-149 generates the 2 subunits p17 and p14 but this cleavage appears to be less efficient. In terms of tissue distribution, specifically expressed in the hermaphrodite germline.

Its subcellular location is the cytoplasm. In terms of biological role, putative inactive caspase. In the germline, binds caspase ced-3 zymogen and prevents ced-3 autoactivation. Does not affect the caspase activity of mature ced-3 and ced-4-mediated mature ced-3 activation. Negatively regulates germline apoptosis by inhibiting autocleavage of caspase ced-3. Involved in fertility. Its function is as follows. Putative inactive caspase. Dispensable for the inhibition of germline apoptosis. The polypeptide is Putative inactive caspase B (Caenorhabditis elegans).